A 371-amino-acid polypeptide reads, in one-letter code: Barbiturase 1 (371 aa).

The segment at 1–103 is RU A; sequence MPDAIEVRKV…TIFATVPPED (103 aa). Residues Arg-53 and 82 to 83 contribute to the substrate site; that span reads SG. Positions 115-250 are RU B; the sequence is RLTVGFAMSE…AQVVVVGNAP (136 aa). The active site involves Lys-165. Residues Asn-197 and 233–234 contribute to the substrate site; that span reads SS. The active-site Nucleophile is Ser-233. The RU C stretch occupies residues 256-371; sequence YRIGHSVMKD…GPVAAIVDLG (116 aa). Residue Glu-304 coordinates Mg(2+). Substrate-binding positions include Lys-331 and 350–351; that span reads SV. Mg(2+)-binding residues include Ala-353, Gln-356, Gly-357, Pro-358, and Gly-361.

It belongs to the cyclic amide hydrolase (CyAH) family. In terms of assembly, homotetramer.

It carries out the reaction barbiturate + H2O = 3-oxo-3-ureidopropanoate. It participates in pyrimidine metabolism; uracil degradation via oxidative pathway; malonate and urea from uracil: step 2/3. Inhibited by cyanuric acid. Responsible for the hydrolysis of barbituric acid (2,4,6-trihydroxy-1,3-pyrimidine), an intermediate in the oxidative catabolism of pyrimidines. Catalyzes the hydrolytic opening of the pyrimidine ring of barbituric acid to yield ureidomalonic acid. The sequence is that of Barbiturase 1 from Nocardioides sp. (strain ATCC BAA-499 / JS614).